We begin with the raw amino-acid sequence, 193 residues long: Probable gluconokinase (193 aa).

18-25 is a binding site for ATP; that stretch reads GTAGTGKS.

Belongs to the gluconokinase GntK/GntV family.

It localises to the cytoplasm. The enzyme catalyses D-gluconate + ATP = 6-phospho-D-gluconate + ADP + H(+). It participates in carbohydrate acid metabolism; D-gluconate degradation. This is Probable gluconokinase from Saccharomyces cerevisiae (strain ATCC 204508 / S288c) (Baker's yeast).